The following is a 155-amino-acid chain: Lipoprotein signal peptidase (155 aa).

2 helical membrane-spanning segments follow: residues 52–72 and 85–105; these read ILQG…AGIV and LGVA…DRVF. Catalysis depends on residues Asp111 and Asp129. Residues 124–144 form a helical membrane-spanning segment; the sequence is IFNIADSSLCVGVILLFIQML.

This sequence belongs to the peptidase A8 family.

It is found in the cell membrane. The catalysed reaction is Release of signal peptides from bacterial membrane prolipoproteins. Hydrolyzes -Xaa-Yaa-Zaa-|-(S,diacylglyceryl)Cys-, in which Xaa is hydrophobic (preferably Leu), and Yaa (Ala or Ser) and Zaa (Gly or Ala) have small, neutral side chains.. The protein operates within protein modification; lipoprotein biosynthesis (signal peptide cleavage). In terms of biological role, this protein specifically catalyzes the removal of signal peptides from prolipoproteins. The sequence is that of Lipoprotein signal peptidase from Bacillus pumilus (strain SAFR-032).